Reading from the N-terminus, the 523-residue chain is uncharacterized protein (523 aa).

Positions 1–14 are enriched in polar residues; the sequence is MAVSKNIKSNVSTH. Disordered stretches follow at residues 1–36, 51–187, and 200–224; these read MAVSKNIKSNVSTHVTKKATKKTTNNGEESKTVKKA, HSSE…VVSS, and QKQEKEEEKQPKLVGHTNEADEMEK. Positions 87-97 are enriched in basic and acidic residues; the sequence is DNRGTRLKGDI. 2 stretches are compositionally biased toward acidic residues: residues 117 to 130 and 138 to 182; these read DMEEDDELDQDNEY and QDDD…DDEN. Over residues 200–210 the composition is skewed to basic and acidic residues; the sequence is QKQEKEEEKQP.

The protein belongs to the AATF family.

This is an uncharacterized protein from Dictyostelium discoideum (Social amoeba).